A 249-amino-acid chain; its full sequence is Triosephosphate isomerase (249 aa).

The substrate site is built by Asn12 and Lys14. Lys14 carries the N6-acetyllysine modification. Tyr68 is subject to 3'-nitrotyrosine. A Phosphoserine modification is found at Ser80. The active-site Electrophile is the His96. A Phosphoserine modification is found at Ser106. A Glycyl lysine isopeptide (Lys-Gly) (interchain with G-Cter in SUMO1) cross-link involves residue Lys142. Lys149 bears the N6-succinyllysine mark. Lys156 carries the N6-acetyllysine; alternate modification. N6-succinyllysine; alternate is present on Lys156. Ser159 carries the post-translational modification Phosphoserine. Glu166 (proton acceptor) is an active-site residue. A Phosphothreonine modification is found at Thr173. Lys194 is subject to N6-acetyllysine; alternate. Residue Lys194 is modified to N6-succinyllysine; alternate. Lys194 is modified (N6-methyllysine; alternate). Ser198 bears the Phosphoserine mark. At Tyr209 the chain carries 3'-nitrotyrosine. Ser212 is subject to Phosphoserine. Thr214 bears the Phosphothreonine mark. Ser223 carries the post-translational modification Phosphoserine. Position 238 is an N6-acetyllysine (Lys238).

This sequence belongs to the triosephosphate isomerase family. Homodimer.

The protein resides in the cytoplasm. It catalyses the reaction dihydroxyacetone phosphate = methylglyoxal + phosphate. The enzyme catalyses D-glyceraldehyde 3-phosphate = dihydroxyacetone phosphate. It participates in carbohydrate degradation; glycolysis; D-glyceraldehyde 3-phosphate from glycerone phosphate: step 1/1. It functions in the pathway carbohydrate biosynthesis; gluconeogenesis. Triosephosphate isomerase is an extremely efficient metabolic enzyme that catalyzes the interconversion between dihydroxyacetone phosphate (DHAP) and D-glyceraldehyde-3-phosphate (G3P) in glycolysis and gluconeogenesis. Functionally, it is also responsible for the non-negligible production of methylglyoxal a reactive cytotoxic side-product that modifies and can alter proteins, DNA and lipids. In Pongo abelii (Sumatran orangutan), this protein is Triosephosphate isomerase (TPI1).